Consider the following 705-residue polypeptide: MLNPITKKFQLGKHTVTLETGAIARQASAAVMASMDDTCVLVSVVGKKEAKPGQDFFPLTVNYQERAYAAGKIPGSFFKREGRPSEEETLIARLIDRPIRPLFPEGFTNEVQVIITVVSVNPEIAPDIISLIGTSAALAISGLPFSGPVGAARVGYTDGQYILNPLQSELPTSQLDLVVSGTDSAVLMVESEADVLSEEVMLGAVVYGHEQMQVAVSAIKEFKAEVNTPSWDWVAPVKNAELLAKIAELSEAQVNEAYQITEKAVRYEKIKEIRSSVLEALLAENADVDVQEAKDLFHDLEKTVVRGRITDGNPRIDGRDPESIRALDVMTGVLPRTHGSAVFTRGETQALVTATLGTQRDAQRLDTLMGDKTDPFMLHYNFPPYCVGETGFVGSPKRREIGHGRLAKRGMLAVMPSLEEFPYAVRVVSEITESNGSSSMASVCGTSLALMDAGVPIKASVAGIAMGLVKEGEKFVVLSDILGDEDHLGDMDFKVAGTTGGITALQMDIKIEGITQEIMQIALNQAKAARTHILSVMDEAIGGHRDDISEFAPRIHTMKVSQDKIRDIIGKGGATIRQLTEETGTTIEIEDDGTVKIAATSGEQAEDAINRIKALTAEIEVGTLYTGKVVRIVDFGAFVNVLPGKDGLVHISQISEERVNNVSEVLTEGQEVKVKVLEVDRQGRVRLSIKEAMEKPAAEATPAAE.

Residues Asp486 and Asp492 each contribute to the Mg(2+) site. The region spanning 553-612 (PRIHTMKVSQDKIRDIIGKGGATIRQLTEETGTTIEIEDDGTVKIAATSGEQAEDAINRI) is the KH domain. The region spanning 622–690 (GTLYTGKVVR…RQGRVRLSIK (69 aa)) is the S1 motif domain.

Belongs to the polyribonucleotide nucleotidyltransferase family. As to quaternary structure, component of the RNA degradosome, which is a multiprotein complex involved in RNA processing and mRNA degradation. Requires Mg(2+) as cofactor.

It localises to the cytoplasm. It carries out the reaction RNA(n+1) + phosphate = RNA(n) + a ribonucleoside 5'-diphosphate. In terms of biological role, involved in mRNA degradation. Catalyzes the phosphorolysis of single-stranded polyribonucleotides processively in the 3'- to 5'-direction. The sequence is that of Polyribonucleotide nucleotidyltransferase from Colwellia psychrerythraea (strain 34H / ATCC BAA-681) (Vibrio psychroerythus).